The chain runs to 239 residues: MAMLRTDLEFSMLPKLDSRPVRWRIADGLVAYEEAVVAMEREVAAIAEGGDELVWLVEHPPLYTAGTSANAGDLVQPDRFPVFATGRGGEYTYHGPGQRVAYVMLDLKRRRQDVRAFVAALEEVVIRTLDMMNVRGERREDRVGVWVRRPEKPMLADGTMAEDKIAALGIRLRKWVTFHGLSLNVDPNLDHFSGIVPCGISAYGVTSLVDLGLPVMMADVDIRLRAAFETVFGETVNEP.

In terms of domain architecture, BPL/LPL catalytic spans 48–236 (EGGDELVWLV…AFETVFGETV (189 aa)). Residues 87 to 94 (RGGEYTYH), 167 to 169 (ALG), and 180 to 182 (GLS) contribute to the substrate site. Residue Cys-198 is the Acyl-thioester intermediate of the active site.

The protein belongs to the LipB family.

Its subcellular location is the cytoplasm. The catalysed reaction is octanoyl-[ACP] + L-lysyl-[protein] = N(6)-octanoyl-L-lysyl-[protein] + holo-[ACP] + H(+). Its pathway is protein modification; protein lipoylation via endogenous pathway; protein N(6)-(lipoyl)lysine from octanoyl-[acyl-carrier-protein]: step 1/2. Catalyzes the transfer of endogenously produced octanoic acid from octanoyl-acyl-carrier-protein onto the lipoyl domains of lipoate-dependent enzymes. Lipoyl-ACP can also act as a substrate although octanoyl-ACP is likely to be the physiological substrate. This Rhizobium etli (strain CIAT 652) protein is Octanoyltransferase.